A 232-amino-acid chain; its full sequence is Large ribosomal subunit protein uL1 (232 aa).

The protein belongs to the universal ribosomal protein uL1 family. In terms of assembly, part of the 50S ribosomal subunit.

Binds directly to 23S rRNA. The L1 stalk is quite mobile in the ribosome, and is involved in E site tRNA release. Functionally, protein L1 is also a translational repressor protein, it controls the translation of the L11 operon by binding to its mRNA. The protein is Large ribosomal subunit protein uL1 of Liberibacter asiaticus (Citrus greening disease).